The chain runs to 316 residues: Transaldolase A (316 aa).

Residue lysine 131 is the Schiff-base intermediate with substrate of the active site.

This sequence belongs to the transaldolase family. Type 1 subfamily. As to quaternary structure, homodimer.

It is found in the cytoplasm. The catalysed reaction is D-sedoheptulose 7-phosphate + D-glyceraldehyde 3-phosphate = D-erythrose 4-phosphate + beta-D-fructose 6-phosphate. The protein operates within carbohydrate degradation; pentose phosphate pathway; D-glyceraldehyde 3-phosphate and beta-D-fructose 6-phosphate from D-ribose 5-phosphate and D-xylulose 5-phosphate (non-oxidative stage): step 2/3. Its function is as follows. Transaldolase is important for the balance of metabolites in the pentose-phosphate pathway. The sequence is that of Transaldolase A (talA) from Escherichia coli O157:H7.